We begin with the raw amino-acid sequence, 89 residues long: Elongation factor 1-beta (89 aa).

This sequence belongs to the EF-1-beta/EF-1-delta family.

In terms of biological role, promotes the exchange of GDP for GTP in EF-1-alpha/GDP, thus allowing the regeneration of EF-1-alpha/GTP that could then be used to form the ternary complex EF-1-alpha/GTP/AAtRNA. The protein is Elongation factor 1-beta of Methanosarcina mazei (strain ATCC BAA-159 / DSM 3647 / Goe1 / Go1 / JCM 11833 / OCM 88) (Methanosarcina frisia).